The chain runs to 154 residues: Interleukin-7 (154 aa).

An N-terminal signal peptide occupies residues 1–25; the sequence is MFHVSFRYIFGIPPLILVLLPVTSS. Disulfide bonds link C27/C145, C58/C133, and C71/C116. 2 N-linked (GlcNAc...) asparagine glycosylation sites follow: N94 and N115.

It belongs to the IL-7/IL-9 family. Interacts with IL7R and CSF2RG. In terms of processing, three disulfide bonds are present.

Its subcellular location is the secreted. Functionally, hematopoietic cytokine that plays an essential role in the development, expansion, and survival of naive and memory T-cells and B-cells thereby regulating the number of mature lymphocytes and maintaining lymphoid homeostasis. Mechanistically, exerts its biological effects through a receptor composed of IL7RA subunit and the cytokine receptor common subunit gamma/CSF2RG. Binding to the receptor leads to activation of various kinases including JAK1 or JAK3 depending on the cell type and subsequently propagation of signals through activation of several downstream signaling pathways including the PI3K/Akt/mTOR or the JAK-STAT5. The polypeptide is Interleukin-7 (Il7) (Rattus norvegicus (Rat)).